Here is a 330-residue protein sequence, read N- to C-terminus: Phosphate acyltransferase (330 aa).

Belongs to the PlsX family. As to quaternary structure, homodimer. Probably interacts with PlsY.

It localises to the cytoplasm. It catalyses the reaction a fatty acyl-[ACP] + phosphate = an acyl phosphate + holo-[ACP]. It functions in the pathway lipid metabolism; phospholipid metabolism. In terms of biological role, catalyzes the reversible formation of acyl-phosphate (acyl-PO(4)) from acyl-[acyl-carrier-protein] (acyl-ACP). This enzyme utilizes acyl-ACP as fatty acyl donor, but not acyl-CoA. The protein is Phosphate acyltransferase of Bacillus cereus (strain B4264).